Reading from the N-terminus, the 294-residue chain is 4-hydroxy-tetrahydrodipicolinate synthase (294 aa).

Residue T45 participates in pyruvate binding. The active-site Proton donor/acceptor is the Y133. The Schiff-base intermediate with substrate role is filled by K162. A pyruvate-binding site is contributed by I204.

This sequence belongs to the DapA family. Homotetramer; dimer of dimers.

Its subcellular location is the cytoplasm. The catalysed reaction is L-aspartate 4-semialdehyde + pyruvate = (2S,4S)-4-hydroxy-2,3,4,5-tetrahydrodipicolinate + H2O + H(+). Its pathway is amino-acid biosynthesis; L-lysine biosynthesis via DAP pathway; (S)-tetrahydrodipicolinate from L-aspartate: step 3/4. Catalyzes the condensation of (S)-aspartate-beta-semialdehyde [(S)-ASA] and pyruvate to 4-hydroxy-tetrahydrodipicolinate (HTPA). This chain is 4-hydroxy-tetrahydrodipicolinate synthase, found in Bartonella henselae (strain ATCC 49882 / DSM 28221 / CCUG 30454 / Houston 1) (Rochalimaea henselae).